The following is a 346-amino-acid chain: Histidinol-phosphate aminotransferase (346 aa).

Lys209 is modified (N6-(pyridoxal phosphate)lysine).

The protein belongs to the class-II pyridoxal-phosphate-dependent aminotransferase family. Histidinol-phosphate aminotransferase subfamily. As to quaternary structure, homodimer. The cofactor is pyridoxal 5'-phosphate.

It catalyses the reaction L-histidinol phosphate + 2-oxoglutarate = 3-(imidazol-4-yl)-2-oxopropyl phosphate + L-glutamate. It functions in the pathway amino-acid biosynthesis; L-histidine biosynthesis; L-histidine from 5-phospho-alpha-D-ribose 1-diphosphate: step 7/9. The protein is Histidinol-phosphate aminotransferase of Aliivibrio fischeri (strain ATCC 700601 / ES114) (Vibrio fischeri).